The primary structure comprises 398 residues: MHFSTVTRDMEAFTASSLSSLGAAGGFPGAASPGADPYGPREPPPPPPRYDPCAAAAPGAPGPPPPPHAYPFAPAAGAATSAAAEPEGPGASCAAAAKAPVKKNAKVAGVSVQLEMKALWDEFNQLGTEMIVTKAGRRMFPTFQVKLFGMDPMADYMLLMDFVPVDDKRYRYAFHSSSWLVAGKADPATPGRVHYHPDSPAKGAQWMKQIVSFDKLKLTNNLLDDNGHIILNSMHRYQPRFHVVYVDPRKDSEKYAEENFKTFVFEETRFTAVTAYQNHRITQLKIASNPFAKGFRDCDPEDWPRNHRPGALPLMSAFARSRNPVASPTQPSGTEKGGHVLKDKEVKAETSRNTPEREVELLRDAGGCVNLGLPCPAECQPFNTQGLVAGRTAGDRLC.

The segment at 23 to 72 (AAGGFPGAASPGADPYGPREPPPPPPRYDPCAAAAPGAPGPPPPPHAYPF) is disordered. Over residues 29–38 (GAASPGADPY) the composition is skewed to low complexity. Composition is skewed to pro residues over residues 40–50 (PREPPPPPPRY) and 60–69 (APGPPPPPHA). The T-box DNA-binding region spans 119 to 297 (LWDEFNQLGT…SNPFAKGFRD (179 aa)).

Binds DNA as a dimer. Interacts with DSCR6. Interacts with NKX2-5.

It localises to the nucleus. In terms of biological role, transcription factor that plays a key role in cardiovascular development by promoting pharyngeal arch segmentation during embryonic development. Also involved in craniofacial muscle development. Together with NKX2-5, acts as a regulator of asymmetric cardiac morphogenesis by promoting expression of PITX2. Acts upstream of TBX1 for the formation of the thymus and parathyroid glands from the third pharyngeal pouch. Required for hair follicle stem cell self-renewal. Binds to the palindromic T site 5'-TTCACACCTAGGTGTGAA-3' DNA sequence. In Homo sapiens (Human), this protein is T-box transcription factor TBX1.